Here is a 57-residue protein sequence, read N- to C-terminus: uncharacterized protein (57 aa).

A helical membrane pass occupies residues 10–27; sequence FGLLWLIIGSEAFHLNAL. The stretch at 28 to 55 forms a coiled coil; the sequence is KQDHLERMKQYDAKIRLAKHEFDDTSNE.

It is found in the membrane. This is an uncharacterized protein from Schizosaccharomyces pombe (strain 972 / ATCC 24843) (Fission yeast).